The sequence spans 875 residues: Valine--tRNA ligase (875 aa).

A 'HIGH' region motif is present at residues 43 to 53; the sequence is PNVTGVLHMGH. Residues 534-538 carry the 'KMSKS' region motif; sequence KMSKS. ATP is bound at residue K537. Positions 805 to 875 form a coiled coil; sequence GNLINTEEEL…LKESIAALKK (71 aa).

Belongs to the class-I aminoacyl-tRNA synthetase family. ValS type 1 subfamily. As to quaternary structure, monomer.

The protein resides in the cytoplasm. The enzyme catalyses tRNA(Val) + L-valine + ATP = L-valyl-tRNA(Val) + AMP + diphosphate. Catalyzes the attachment of valine to tRNA(Val). As ValRS can inadvertently accommodate and process structurally similar amino acids such as threonine, to avoid such errors, it has a 'posttransfer' editing activity that hydrolyzes mischarged Thr-tRNA(Val) in a tRNA-dependent manner. The polypeptide is Valine--tRNA ligase (Phocaeicola vulgatus (strain ATCC 8482 / DSM 1447 / JCM 5826 / CCUG 4940 / NBRC 14291 / NCTC 11154) (Bacteroides vulgatus)).